A 295-amino-acid polypeptide reads, in one-letter code: Pantothenate synthetase (295 aa).

Catalysis depends on His37, which acts as the Proton donor. Gln61 lines the (R)-pantoate pocket. Gln61 is a binding site for beta-alanine. 154–157 serves as a coordination point for ATP; it reads GRKD. Gln160 provides a ligand contact to (R)-pantoate. Residues Val183 and 191–194 each bind ATP; that span reads QSSR.

The protein belongs to the pantothenate synthetase family. In terms of assembly, homodimer.

The protein resides in the cytoplasm. It carries out the reaction (R)-pantoate + beta-alanine + ATP = (R)-pantothenate + AMP + diphosphate + H(+). Its pathway is cofactor biosynthesis; (R)-pantothenate biosynthesis; (R)-pantothenate from (R)-pantoate and beta-alanine: step 1/1. Functionally, catalyzes the condensation of pantoate with beta-alanine in an ATP-dependent reaction via a pantoyl-adenylate intermediate. The protein is Pantothenate synthetase of Salinibacter ruber (strain DSM 13855 / M31).